Reading from the N-terminus, the 292-residue chain is RWD domain-containing protein 2A (292 aa).

Residues 14–134 (LEMEMLFSMF…QWLQDNSASY (121 aa)) enclose the RWD domain.

In Homo sapiens (Human), this protein is RWD domain-containing protein 2A (RWDD2A).